The following is a 382-amino-acid chain: uncharacterized protein (382 aa).

12 helical membrane-spanning segments follow: residues 8-28 (VMLL…LNTL), 45-65 (MVSS…GYLI), 75-95 (YLAS…VGFW), 102-122 (FIAG…LMCS), 131-151 (LLAA…LLVS), 157-177 (LLHV…PLLF), 204-224 (LGVN…GLMP), 231-251 (GMAN…GILG), 270-290 (VQVF…AMAP), 291-311 (ALFI…AWAC), 325-345 (ALLL…AMLM), and 349-369 (SDNL…LMLL).

It belongs to the major facilitator superfamily. YcaD (TC 2.A.1.26) family.

Its subcellular location is the cell inner membrane. This is an uncharacterized protein from Salmonella enteritidis PT4 (strain P125109).